The primary structure comprises 461 residues: High-affinity Na(+)/H(+) antiporter NhaS3 (461 aa).

Helical transmembrane passes span 22-42, 58-78, 113-133, 148-170, 175-197, 209-229, 239-259, 280-300, 360-380, 391-411, and 424-444; these read TEIA…IYFA, VLGE…LLLF, SEVI…EIGL, AIVA…MTIF, IPAI…KVLA, IIIG…AVVG, ISNI…SILI, LLLV…IVQL, GLII…VTGF, LAIG…AGVG, and AIIV…RAVF.

The protein belongs to the monovalent cation:proton antiporter 2 (CPA2) transporter (TC 2.A.37) family.

The protein localises to the cellular thylakoid membrane. Na(+)/H(+) antiporter that transports sodium from the cytoplasm into the thylakoid lumen in exchange for protons. Contributes to sodium homeostasis and tolerance. Also has Li(+)/H(+) antiport activity under K(+)-free conditions, but not under K(+)-rich conditions. This is High-affinity Na(+)/H(+) antiporter NhaS3 (nhaS3) from Synechocystis sp. (strain ATCC 27184 / PCC 6803 / Kazusa).